The chain runs to 189 residues: Interferon alpha-6 (189 aa).

An N-terminal signal peptide occupies residues 1–20 (MALPFALLMALVVLSCKSSC). 2 disulfide bridges follow: C24-C122 and C52-C162.

It belongs to the alpha/beta interferon family.

It is found in the secreted. Functionally, produced by macrophages, IFN-alpha have antiviral activities. Interferon stimulates the production of two enzymes: a protein kinase and an oligoadenylate synthetase. The chain is Interferon alpha-6 (IFNA6) from Homo sapiens (Human).